We begin with the raw amino-acid sequence, 432 residues long: Trigger factor (432 aa).

Residues 165-250 (GDFAKIDFEG…LKEIQVKAPQ (86 aa)) enclose the PPIase FKBP-type domain.

This sequence belongs to the FKBP-type PPIase family. Tig subfamily.

The protein resides in the cytoplasm. It carries out the reaction [protein]-peptidylproline (omega=180) = [protein]-peptidylproline (omega=0). Involved in protein export. Acts as a chaperone by maintaining the newly synthesized protein in an open conformation. Functions as a peptidyl-prolyl cis-trans isomerase. The polypeptide is Trigger factor (Wolinella succinogenes (strain ATCC 29543 / DSM 1740 / CCUG 13145 / JCM 31913 / LMG 7466 / NCTC 11488 / FDC 602W) (Vibrio succinogenes)).